We begin with the raw amino-acid sequence, 147 residues long: TRAF-interacting protein with FHA domain-containing protein B (147 aa).

An FHA domain is found at Leu36–Ser108.

In terms of assembly, interacts with TIFA. Expressed at high levels in spleen and at moderate levels in lung, thymus, and small intestine.

In terms of biological role, inhibits TIFA-mediated TRAF6 activation possibly by inducing a conformational change in TIFA. The chain is TRAF-interacting protein with FHA domain-containing protein B from Mus musculus (Mouse).